A 241-amino-acid polypeptide reads, in one-letter code: 1-(5-phosphoribosyl)-5-[(5-phosphoribosylamino)methylideneamino] imidazole-4-carboxamide isomerase (241 aa).

Asp-10 functions as the Proton acceptor in the catalytic mechanism. The active-site Proton donor is Asp-131.

Belongs to the HisA/HisF family.

It localises to the cytoplasm. The catalysed reaction is 1-(5-phospho-beta-D-ribosyl)-5-[(5-phospho-beta-D-ribosylamino)methylideneamino]imidazole-4-carboxamide = 5-[(5-phospho-1-deoxy-D-ribulos-1-ylimino)methylamino]-1-(5-phospho-beta-D-ribosyl)imidazole-4-carboxamide. It participates in amino-acid biosynthesis; L-histidine biosynthesis; L-histidine from 5-phospho-alpha-D-ribose 1-diphosphate: step 4/9. The chain is 1-(5-phosphoribosyl)-5-[(5-phosphoribosylamino)methylideneamino] imidazole-4-carboxamide isomerase from Bifidobacterium longum (strain DJO10A).